The sequence spans 521 residues: Bifunctional purine biosynthesis protein PurH (521 aa).

Positions 1–145 constitute an MGS-like domain; the sequence is MIKQALISVS…KNHKDVIVIC (145 aa).

It belongs to the PurH family.

It carries out the reaction (6R)-10-formyltetrahydrofolate + 5-amino-1-(5-phospho-beta-D-ribosyl)imidazole-4-carboxamide = 5-formamido-1-(5-phospho-D-ribosyl)imidazole-4-carboxamide + (6S)-5,6,7,8-tetrahydrofolate. It catalyses the reaction IMP + H2O = 5-formamido-1-(5-phospho-D-ribosyl)imidazole-4-carboxamide. The protein operates within purine metabolism; IMP biosynthesis via de novo pathway; 5-formamido-1-(5-phospho-D-ribosyl)imidazole-4-carboxamide from 5-amino-1-(5-phospho-D-ribosyl)imidazole-4-carboxamide (10-formyl THF route): step 1/1. It participates in purine metabolism; IMP biosynthesis via de novo pathway; IMP from 5-formamido-1-(5-phospho-D-ribosyl)imidazole-4-carboxamide: step 1/1. The protein is Bifunctional purine biosynthesis protein PurH of Janthinobacterium sp. (strain Marseille) (Minibacterium massiliensis).